The primary structure comprises 470 residues: Neuraminidase (470 aa).

Residues 1–14 lie on the Intravirion side of the membrane; that stretch reads MNPNQKIITIGSAS. The interval 11–32 is involved in apical transport and lipid raft association; sequence GSASLGILILNVILHVVSIIVT. A helical membrane pass occupies residues 15 to 35; it reads LGILILNVILHVVSIIVTVLV. Residues 32–86 are hypervariable stalk region; it reads TVLVLNNNGTGLNCNGTIIREYNETVRVERVIQWYNTNTIEYIERPSNEYYMNNT. Over 36 to 470 the chain is Virion surface; sequence LNNNGTGLNC…AILPFDIDKM (435 aa). Residues Asn-39, Asn-46, Asn-54, and Asn-84 are each glycosylated (N-linked (GlcNAc...) asparagine; by host). Positions 89–470 are head of neuraminidase; the sequence is LCEAQGFAPF…AILPFDIDKM (382 aa). Disulfide bonds link Cys-90-Cys-417, Cys-122-Cys-127, Cys-182-Cys-229, Cys-231-Cys-236, Cys-277-Cys-290, Cys-279-Cys-288, Cys-316-Cys-335, and Cys-421-Cys-446. Residue Arg-116 participates in substrate binding. Asn-144 carries an N-linked (GlcNAc...) asparagine; by host glycan. Residue Asp-149 is the Proton donor/acceptor of the active site. Residue Arg-150 coordinates substrate. 275 to 276 serves as a coordination point for substrate; that stretch reads EE. Arg-291 contacts substrate. Asp-292 contacts Ca(2+). N-linked (GlcNAc...) asparagine; by host glycosylation is present at Asn-293. Gly-296 and Asp-322 together coordinate Ca(2+). Position 368 (Arg-368) interacts with substrate. Asn-398 carries N-linked (GlcNAc...) asparagine; by host glycosylation. The Nucleophile role is filled by Tyr-402.

The protein belongs to the glycosyl hydrolase 34 family. As to quaternary structure, homotetramer. The cofactor is Ca(2+). N-glycosylated.

The protein resides in the virion membrane. It localises to the host apical cell membrane. It carries out the reaction Hydrolysis of alpha-(2-&gt;3)-, alpha-(2-&gt;6)-, alpha-(2-&gt;8)- glycosidic linkages of terminal sialic acid residues in oligosaccharides, glycoproteins, glycolipids, colominic acid and synthetic substrates.. Its activity is regulated as follows. Inhibited by the neuraminidase inhibitors zanamivir (Relenza) and oseltamivir (Tamiflu). These drugs interfere with the release of progeny virus from infected cells and are effective against all influenza strains. Resistance to neuraminidase inhibitors is quite rare. Its function is as follows. Catalyzes the removal of terminal sialic acid residues from viral and cellular glycoconjugates. Cleaves off the terminal sialic acids on the glycosylated HA during virus budding to facilitate virus release. Additionally helps virus spread through the circulation by further removing sialic acids from the cell surface. These cleavages prevent self-aggregation and ensure the efficient spread of the progeny virus from cell to cell. Otherwise, infection would be limited to one round of replication. Described as a receptor-destroying enzyme because it cleaves a terminal sialic acid from the cellular receptors. May facilitate viral invasion of the upper airways by cleaving the sialic acid moieties on the mucin of the airway epithelial cells. Likely to plays a role in the budding process through its association with lipid rafts during intracellular transport. May additionally display a raft-association independent effect on budding. Plays a role in the determination of host range restriction on replication and virulence. Sialidase activity in late endosome/lysosome traffic seems to enhance virus replication. This chain is Neuraminidase, found in Influenza A virus (strain A/Equine/Santiago/1/1985 H3N8).